The chain runs to 334 residues: tRNA U34 carboxymethyltransferase (334 aa).

Residues lysine 91, tryptophan 105, lysine 110, glycine 130, 152-154 (DPT), 181-182 (IE), methionine 196, tyrosine 200, and arginine 315 each bind carboxy-S-adenosyl-L-methionine.

It belongs to the class I-like SAM-binding methyltransferase superfamily. CmoB family. Homotetramer.

The enzyme catalyses carboxy-S-adenosyl-L-methionine + 5-hydroxyuridine(34) in tRNA = 5-carboxymethoxyuridine(34) in tRNA + S-adenosyl-L-homocysteine + H(+). Functionally, catalyzes carboxymethyl transfer from carboxy-S-adenosyl-L-methionine (Cx-SAM) to 5-hydroxyuridine (ho5U) to form 5-carboxymethoxyuridine (cmo5U) at position 34 in tRNAs. This is tRNA U34 carboxymethyltransferase from Klebsiella pneumoniae (strain 342).